The following is a 183-amino-acid chain: NADH-quinone oxidoreductase subunit I (183 aa).

4Fe-4S ferredoxin-type domains follow at residues 44–74 and 90–119; these read LNRW…VEAG and RVYQ…MTNE. [4Fe-4S] cluster-binding residues include Cys54, Cys57, Cys60, Cys64, Cys99, Cys102, Cys105, and Cys109. The tract at residues 143 to 183 is disordered; that stretch reads QGMEAPPHPMRLGETEKDYYRLGRDDNAAARADEQNSEAVQ. The segment covering 153-176 has biased composition (basic and acidic residues); sequence RLGETEKDYYRLGRDDNAAARADE.

The protein belongs to the complex I 23 kDa subunit family. NDH-1 is composed of 14 different subunits. Subunits NuoA, H, J, K, L, M, N constitute the membrane sector of the complex. [4Fe-4S] cluster serves as cofactor.

The protein resides in the cell membrane. It carries out the reaction a quinone + NADH + 5 H(+)(in) = a quinol + NAD(+) + 4 H(+)(out). NDH-1 shuttles electrons from NADH, via FMN and iron-sulfur (Fe-S) centers, to quinones in the respiratory chain. The immediate electron acceptor for the enzyme in this species is believed to be ubiquinone. Couples the redox reaction to proton translocation (for every two electrons transferred, four hydrogen ions are translocated across the cytoplasmic membrane), and thus conserves the redox energy in a proton gradient. This chain is NADH-quinone oxidoreductase subunit I, found in Thermobifida fusca (strain YX).